The primary structure comprises 55 residues: MAKDGPRIIVKMESTAGTGFYYTTTKNRRNTQAKMELRKYDPVAKKHVVFKEKKV.

Belongs to the bacterial ribosomal protein bL33 family.

In Deinococcus deserti (strain DSM 17065 / CIP 109153 / LMG 22923 / VCD115), this protein is Large ribosomal subunit protein bL33.